We begin with the raw amino-acid sequence, 78 residues long: Large ribosomal subunit protein bL28 (78 aa).

Belongs to the bacterial ribosomal protein bL28 family.

The sequence is that of Large ribosomal subunit protein bL28 from Pseudomonas aeruginosa (strain LESB58).